The following is a 138-amino-acid chain: Transcription antitermination protein NusB (138 aa).

Belongs to the NusB family.

Involved in transcription antitermination. Required for transcription of ribosomal RNA (rRNA) genes. Binds specifically to the boxA antiterminator sequence of the ribosomal RNA (rrn) operons. The polypeptide is Transcription antitermination protein NusB (Limosilactobacillus reuteri (strain DSM 20016) (Lactobacillus reuteri)).